Here is an 842-residue protein sequence, read N- to C-terminus: MNKTTEYIDAMPLSDIEKAALPKTDIRAVHEALDVEHRAYSREDDSPQGSVKARLEQAWPDSLAEGQLIKDNEGRDQLQAMPKATRSSMFPDPWRTNPLGRFWDRLRGRDVTPRYLSRLTKEEQENEQKWRTVGTIRRYILLLLTLAQTVVATWYMKTILPYQGWALINPADMIGQDLWVSFMQLLPYVLQTGILILFAVLFCWVSAGFWTALMGFLQLLIGRDKYSISASTVGNEPLNPEHRTALIMPICNEDVDRVFAGLRATWESVKATGNAAHFDVYILSDSYNPDICVAEQKAWMELIAEVQGEGQIFYRRRRRRVKRKSGNIDDFCRRWGNQYSYMVVLDADSVMTGECLSGLVRLMEANPNAGIIQSSPKASGMDTLYARCQQFATRVYGPLFTAGLHFWQLGESHYWGHNAIIRVKPFIEHCALAPLPGEGSFAGSILSHDFVEAALMRRAGWGVWIAYDLPGSYEELPPNLLDELKRDRRWCHGNLMNFRLFLVKGMHPVHRAVFLTGVMSYLSAPLWFMFLALSTALQVVHALTEPQYFLQPRQLFPVWPQWRPELAIALFASTMVLLFLPKLLSIMLIWCKGTKEYGGFVRVTLSLLLEVLFSVLLAPVRMLFHTVFVVSAFLGWEVVWNSPQRDDDSTPWGEAFMRHGSQLLLGLVWAVGMAWLDLRFLFWLAPIVFSLILSPFVSVVSSRSTVGLRTKRWKLFLIPEEYSPPQVLVDTDKYLAMNRNRTLDDGFMHAVFNPSFNALATAMATARHRASKVLEIARDRHVEQALNETPEKLNRDRRLVLLSDPVTMARLHYRVWNSPERYSSWVNYYQGINLNPLALQKK.

Transmembrane regions (helical) follow at residues 140–160 (ILLL…KTIL), 194–214 (ILIL…TALM), 513–533 (VFLT…FLAL), 570–590 (LFAS…MLIW), 615–635 (VLLA…AFLG), 656–676 (FMRH…MAWL), and 680–700 (FLFW…VSVV).

Belongs to the glycosyltransferase 2 family. OpgH subfamily.

The protein resides in the cell inner membrane. It participates in glycan metabolism; osmoregulated periplasmic glucan (OPG) biosynthesis. In terms of biological role, involved in the biosynthesis of osmoregulated periplasmic glucans (OPGs). This chain is Glucans biosynthesis glucosyltransferase H, found in Citrobacter koseri (strain ATCC BAA-895 / CDC 4225-83 / SGSC4696).